Here is a 312-residue protein sequence, read N- to C-terminus: Olfactory receptor 51A7 (312 aa).

The Extracellular segment spans residues 1–25 (MSVLNNSEVKLFLLIGIPGLEHAHI). Asparagine 5 carries N-linked (GlcNAc...) asparagine glycosylation. The helical transmembrane segment at 26–46 (WFSIPICLMYLLAIMGNCTIL) threads the bilayer. At 47–54 (FIIKTEPS) the chain is on the cytoplasmic side. The chain crosses the membrane as a helical span at residues 55–75 (LHEPMYYFLAMLAVSDMGLSL). Over 76 to 99 (SSLPTMLRVFLFNAMGISPNACFA) the chain is Extracellular. A disulfide bond links cysteine 97 and cysteine 189. The chain crosses the membrane as a helical span at residues 100–120 (QEFFIHGFTVMESSVLLIMSL). Topologically, residues 121–139 (DRFLAIHNPLRYSSILTSN) are cytoplasmic. A helical membrane pass occupies residues 140–160 (RVAKMGLILAIRSILLVIPFP). Topologically, residues 161 to 196 (FTLRRLKYCQKNLLSHSYCLHQDTMKLACSDNKTNV) are extracellular. Asparagine 192 carries N-linked (GlcNAc...) asparagine glycosylation. The chain crosses the membrane as a helical span at residues 197-216 (IYGFFIALCTMLDLALIVLS). Residues 217–236 (YVLILKTILSIASLAERLKA) lie on the Cytoplasmic side of the membrane. The helical transmembrane segment at 237–257 (LNTCVSHICAVLTFYVPIITL) threads the bilayer. Residues 258 to 272 (AAMHHFAKHKSPLVV) are Extracellular-facing. Residues 273 to 293 (ILIADMFLLVPPLMNPIVYCV) traverse the membrane as a helical segment. The Cytoplasmic portion of the chain corresponds to 294–312 (KTRQIWEKILGKLLNVCGR).

It belongs to the G-protein coupled receptor 1 family.

The protein localises to the cell membrane. Its function is as follows. Odorant receptor. In Homo sapiens (Human), this protein is Olfactory receptor 51A7 (OR51A7).